Here is a 190-residue protein sequence, read N- to C-terminus: Major sperm protein 32 (190 aa).

The MSP domain occupies 72-189 (MIQTQPGTKI…RRKNLPIEYN (118 aa)).

In terms of tissue distribution, sperm.

The protein localises to the cell projection. The protein resides in the pseudopodium. It is found in the cytoplasm. Its subcellular location is the cytoskeleton. Its function is as follows. Central component in molecular interactions underlying sperm crawling. Forms an extensive filament system that extends from sperm villipoda, along the leading edge of the pseudopod. The chain is Major sperm protein 32 (msp-32) from Caenorhabditis elegans.